The primary structure comprises 71 residues: Small ribosomal subunit protein bS21 (71 aa).

Basic residues predominate over residues 48 to 59; it reads KAAAAVKRHAKK. A disordered region spans residues 48–71; sequence KAAAAVKRHAKKVQREQRRRERLY. Over residues 60–71 the composition is skewed to basic and acidic residues; that stretch reads VQREQRRRERLY.

It belongs to the bacterial ribosomal protein bS21 family.

This Azotobacter vinelandii (strain DJ / ATCC BAA-1303) protein is Small ribosomal subunit protein bS21.